The following is a 182-amino-acid chain: ADP-ribosylation factor-like protein 3 (182 aa).

The N-myristoyl glycine moiety is linked to residue G2. S5 bears the Phosphoserine mark. Residues 24–31 (GLDNAGKT), T48, 67–71 (DIGGQ), G70, 126–129 (NKQD), and 159–161 (SAL) contribute to the GTP site. Positions 31 and 48 each coordinate Mg(2+).

The protein belongs to the small GTPase superfamily. Arf family. In terms of assembly, found in a complex with ARL3, RP2 and UNC119 (or UNC119B); RP2 induces hydrolysis of GTP ARL3 in the complex, leading to the release of UNC119 (or UNC119B). Interacts with RP2; interaction is direct and stimulated with the activated GTP-bound form of ARL3. Interacts with SYS1. Interacts with ARL2BP; the GTP-bound form interacts with ARL2BP. Microtubule-associated protein. Does not interact with TBCC. Interacts with RP2. Interacts with PDE6D; the interaction occurs specifically with the GTP-bound form of ARL3. Interacts with GGA1; the interaction recruits PKD1:PKD2 complex to trans-Golgi network and is required for ciliary targeting of PKD1:PKD2 complex. Interacts with DNAAF9.

The protein localises to the golgi apparatus membrane. It localises to the cytoplasm. It is found in the cytoskeleton. Its subcellular location is the spindle. The protein resides in the nucleus. The protein localises to the microtubule organizing center. It localises to the centrosome. It is found in the cell projection. Its subcellular location is the cilium. In terms of biological role, small GTP-binding protein which cycles between an inactive GDP-bound and an active GTP-bound form, and the rate of cycling is regulated by guanine nucleotide exchange factors (GEF) and GTPase-activating proteins (GAP). Required for normal cytokinesis and cilia signaling. Requires assistance from GTPase-activating proteins (GAPs) like RP2 and PDE6D, in order to cycle between inactive GDP-bound and active GTP-bound forms. Required for targeting proteins to the cilium, including myristoylated NPHP3 and prenylated INPP5E. Targets NPHP3 to the ciliary membrane by releasing myristoylated NPHP3 from UNC119B cargo adapter into the cilium. Required for PKD1:PKD2 complex targeting from the trans-Golgi network to the cilium. The chain is ADP-ribosylation factor-like protein 3 (ARL3) from Bos taurus (Bovine).